The chain runs to 424 residues: Multifunctional CCA protein (424 aa).

ATP contacts are provided by glycine 8 and arginine 11. CTP is bound by residues glycine 8 and arginine 11. The Mg(2+) site is built by aspartate 21 and aspartate 23. Positions 91, 149, and 152 each coordinate ATP. The CTP site is built by arginine 91, arginine 149, and arginine 152. One can recognise an HD domain in the interval 238–339 (TGIHLMMVLD…VRLLERCDAF (102 aa)).

This sequence belongs to the tRNA nucleotidyltransferase/poly(A) polymerase family. Bacterial CCA-adding enzyme type 1 subfamily. Monomer. Can also form homodimers and oligomers. The cofactor is Mg(2+). Ni(2+) serves as cofactor.

The enzyme catalyses a tRNA precursor + 2 CTP + ATP = a tRNA with a 3' CCA end + 3 diphosphate. It catalyses the reaction a tRNA with a 3' CCA end + 2 CTP + ATP = a tRNA with a 3' CCACCA end + 3 diphosphate. Catalyzes the addition and repair of the essential 3'-terminal CCA sequence in tRNAs without using a nucleic acid template. Adds these three nucleotides in the order of C, C, and A to the tRNA nucleotide-73, using CTP and ATP as substrates and producing inorganic pyrophosphate. tRNA 3'-terminal CCA addition is required both for tRNA processing and repair. Also involved in tRNA surveillance by mediating tandem CCA addition to generate a CCACCA at the 3' terminus of unstable tRNAs. While stable tRNAs receive only 3'-terminal CCA, unstable tRNAs are marked with CCACCA and rapidly degraded. In Polaromonas naphthalenivorans (strain CJ2), this protein is Multifunctional CCA protein.